The chain runs to 1098 residues: WD repeat-containing protein 72 (1098 aa).

WD repeat units follow at residues 15–54 (APPH…KISA), 60–102 (GHSA…CVEK), 158–196 (WINC…NSIQ), 315–359 (ENKN…VSKF), 399–438 (AGTA…KARL), 456–501 (GHHQ…ILHK), 504–549 (LEAG…CLLR), and 552–591 (KHLF…LERH). Phosphoserine is present on residues Ser1077 and Ser1079.

It localises to the cytoplasmic vesicle. Plays a major role in formation of tooth enamel. Specifically required during the maturation phase of amelogenesis for normal formation of the enamel matrix and clearance of enamel proteins. May be involved in localization of the calcium transporter SLC24A4 to the ameloblast cell membrane. This chain is WD repeat-containing protein 72 (WDR72), found in Pongo abelii (Sumatran orangutan).